Consider the following 456-residue polypeptide: Cysteine--tRNA ligase (456 aa).

Cysteine 28 is a binding site for Zn(2+). Residues 30–40 carry the 'HIGH' region motif; it reads ITVYDHCHLGH. 3 residues coordinate Zn(2+): cysteine 209, histidine 234, and glutamate 238. Residues 266 to 270 carry the 'KMSKS' region motif; the sequence is KMAKS. Lysine 269 contacts ATP.

Belongs to the class-I aminoacyl-tRNA synthetase family. As to quaternary structure, monomer. Zn(2+) serves as cofactor.

It localises to the cytoplasm. The catalysed reaction is tRNA(Cys) + L-cysteine + ATP = L-cysteinyl-tRNA(Cys) + AMP + diphosphate. This Legionella pneumophila (strain Corby) protein is Cysteine--tRNA ligase.